The primary structure comprises 349 residues: Microbial Terpene synthase-like protein 1 (349 aa).

Mg(2+) contacts are provided by D98, D102, N243, and S247. The DDXXD motif motif lies at 98–102 (DDILD).

The protein belongs to the terpene synthase family. The cofactor is Mg(2+).

The protein operates within secondary metabolite biosynthesis; terpenoid biosynthesis. Sesquiterpene synthase converting farnesyl diphosphate to six sesquiterpenes, with beta-elemene, delta-cadinene and an unidentified oxygenated sesquiterpene as the major products. Has no diterpene synthase activity. The sequence is that of Microbial Terpene synthase-like protein 1 from Selaginella moellendorffii (Spikemoss).